The following is an 85-amino-acid chain: N.vectensis toxin 1 6 (85 aa).

A signal peptide spans 1–20; the sequence is MASFKIVIVCLALLVAVACA. The propeptide occupies 21–36; the sequence is RRRDMMSDDELDYHYS. Intrachain disulfides connect Cys42–Cys82, Cys44–Cys72, and Cys65–Cys83.

Belongs to the sea anemone sodium channel inhibitory toxin family. Type II subfamily. As to expression, expressed in ectodermal glands and in clumps outside of the extodermal layer. Is not expressed in nematocytes. In adult female tissues, shows similar expression levels in mesenteries (gametes-producing tissue), tentacles, pharynx and physa.

The protein localises to the secreted. In terms of biological role, binds to site 3 of voltage-gated sodium channels and inhibits the inactivation process. Is highly active on DmNav1/TipE (drosophila) and is only extremely weakly active on rat Nav1.4-beta-1/SCN4A-SCN1B, and on human Nav1.5-beta-1/SCN5A-beta-1. This reveals high specificity for arthropod over mammalian channels. In vivo, when released into the medium, this recombinant toxin induces impaired swimming, paralysis and death of the crustacean A.nauplii within several hours. Also causes paralysis of cherry shrimps immediately after injection at very low doses. Its effect on zebrafish (D.rerio) larvae is also rapid, since it induces tail twitching accompanied by impaired swimming after 20 minutes and complete paralysis within 45 minutes. It has also been observed to cause death of zebrafish larvae within 1 hour. The chain is N.vectensis toxin 1 6 from Nematostella vectensis (Starlet sea anemone).